We begin with the raw amino-acid sequence, 386 residues long: Mannitol-1-phosphate 5-dehydrogenase (386 aa).

6–17 (AIHFGGGNIGRG) provides a ligand contact to NAD(+). Residue Lys-214 is part of the active site.

Belongs to the mannitol dehydrogenase family. Monomer.

The catalysed reaction is D-mannitol 1-phosphate + NAD(+) = beta-D-fructose 6-phosphate + NADH + H(+). In terms of biological role, catalyzes the NAD(H)-dependent interconversion of D-fructose 6-phosphate and D-mannitol 1-phosphate in the mannitol metabolic pathway. Plays a key role in liamocins biosynthesis by providing the mannitol moity that is linked to 3,5-dihydroxydecanoic acid (provided by the HR-PKS PKS1) via ester bond formation catalyzed by the esterase EST1. The chain is Mannitol-1-phosphate 5-dehydrogenase from Aureobasidium melanogenum (Aureobasidium pullulans var. melanogenum).